Consider the following 156-residue polypeptide: MPRRRVIGQRKILPDPKFGSELLAKFVNILMVDGKKSTAEAIVYSALETLAQRSDKNALEAFEVALDNVRPTVEVKSRRVGGSTYQVPVEVRPVRRNALAMRWIVEAARKRGDKSMALRLANELSDAADNKGTAVKKREDVHRMAEANKAFAHYRW.

This sequence belongs to the universal ribosomal protein uS7 family. In terms of assembly, part of the 30S ribosomal subunit. Contacts proteins S9 and S11.

Functionally, one of the primary rRNA binding proteins, it binds directly to 16S rRNA where it nucleates assembly of the head domain of the 30S subunit. Is located at the subunit interface close to the decoding center, probably blocks exit of the E-site tRNA. This Enterobacter sp. (strain 638) protein is Small ribosomal subunit protein uS7.